Consider the following 409-residue polypeptide: Phosphopentomutase (409 aa).

Mn(2+)-binding residues include D10, D302, H307, D343, H344, and H355.

This sequence belongs to the phosphopentomutase family. Mn(2+) is required as a cofactor.

It is found in the cytoplasm. It carries out the reaction 2-deoxy-alpha-D-ribose 1-phosphate = 2-deoxy-D-ribose 5-phosphate. It catalyses the reaction alpha-D-ribose 1-phosphate = D-ribose 5-phosphate. The protein operates within carbohydrate degradation; 2-deoxy-D-ribose 1-phosphate degradation; D-glyceraldehyde 3-phosphate and acetaldehyde from 2-deoxy-alpha-D-ribose 1-phosphate: step 1/2. Functionally, isomerase that catalyzes the conversion of deoxy-ribose 1-phosphate (dRib-1-P) and ribose 1-phosphate (Rib-1-P) to deoxy-ribose 5-phosphate (dRib-5-P) and ribose 5-phosphate (Rib-5-P), respectively. The sequence is that of Phosphopentomutase from Chelativorans sp. (strain BNC1).